The following is a 331-amino-acid chain: Ketol-acid reductoisomerase (NADP(+)) (331 aa).

Residues 2–182 form the KARI N-terminal Rossmann domain; that stretch reads AKIYTDKDAS…GATRAGVIET (181 aa). NADP(+) is bound by residues 25-28, arginine 48, serine 53, and 83-86; these read YGIQ and DMEQ. Histidine 108 is an active-site residue. Residue glycine 134 coordinates NADP(+). Positions 183-328 constitute a KARI C-terminal knotted domain; it reads TFAEETETDL…AEMRKLLFGR (146 aa). Mg(2+)-binding residues include aspartate 191, glutamate 195, glutamate 227, and glutamate 231. Serine 252 is a substrate binding site.

This sequence belongs to the ketol-acid reductoisomerase family. Mg(2+) is required as a cofactor.

The enzyme catalyses (2R)-2,3-dihydroxy-3-methylbutanoate + NADP(+) = (2S)-2-acetolactate + NADPH + H(+). It catalyses the reaction (2R,3R)-2,3-dihydroxy-3-methylpentanoate + NADP(+) = (S)-2-ethyl-2-hydroxy-3-oxobutanoate + NADPH + H(+). Its pathway is amino-acid biosynthesis; L-isoleucine biosynthesis; L-isoleucine from 2-oxobutanoate: step 2/4. The protein operates within amino-acid biosynthesis; L-valine biosynthesis; L-valine from pyruvate: step 2/4. Functionally, involved in the biosynthesis of branched-chain amino acids (BCAA). Catalyzes an alkyl-migration followed by a ketol-acid reduction of (S)-2-acetolactate (S2AL) to yield (R)-2,3-dihydroxy-isovalerate. In the isomerase reaction, S2AL is rearranged via a Mg-dependent methyl migration to produce 3-hydroxy-3-methyl-2-ketobutyrate (HMKB). In the reductase reaction, this 2-ketoacid undergoes a metal-dependent reduction by NADPH to yield (R)-2,3-dihydroxy-isovalerate. The sequence is that of Ketol-acid reductoisomerase (NADP(+)) from Pyrobaculum islandicum (strain DSM 4184 / JCM 9189 / GEO3).